Reading from the N-terminus, the 1028-residue chain is Beta-galactosidase (1028 aa).

Positions 104 and 203 each coordinate substrate. Residue Asp203 coordinates Na(+). Mg(2+)-binding residues include Glu418, His420, and Glu463. Substrate contacts are provided by residues Glu463 and 539–542; that span reads EYAH. Glu463 acts as the Proton donor in catalysis. Glu539 serves as the catalytic Nucleophile. Asn599 provides a ligand contact to Mg(2+). Na(+) is bound by residues Phe603 and Asn606. 2 residues coordinate substrate: Asn606 and Trp1004.

It belongs to the glycosyl hydrolase 2 family. Homodimer. Mg(2+) serves as cofactor. It depends on Mn(2+) as a cofactor. Requires Fe cation as cofactor. Na(+) is required as a cofactor. The cofactor is K(+).

It carries out the reaction Hydrolysis of terminal non-reducing beta-D-galactose residues in beta-D-galactosides.. Its activity is regulated as follows. Completely inhibited by Hg(2+), Cu(2+) Ag(2+), and partially inhibited by Zn(2+), imidazole and EDTA. Activated by Ca(2+), Co(2+), Ni(2+). In terms of biological role, this beta-galactosidase is also able to catalyze glycosyl transfer to a series of acceptors, including hexose, pentose, beta- or alpha-disaccharides, hexahydroxy alcohol, cyclitol, and aromatic glycosides, resulting in the production of galacto-oligosaccharides (GOS). This chain is Beta-galactosidase (lacZ), found in Enterobacter agglomerans (Erwinia herbicola).